Reading from the N-terminus, the 994-residue chain is Myosin IA heavy chain (994 aa).

Positions 12–720 (VGVEDLIMLT…PLFLLEDKRN (709 aa)) constitute a Myosin motor domain. 105–112 (GESGAGKT) provides a ligand contact to ATP. Residues 574–654 (TFIPTDKKRP…RAGYCYRQTF (81 aa)) are actin-binding. 2 IQ domains span residues 723-744 (LNDL…KWYL) and 745-774 (RTLA…QSIS). In terms of domain architecture, TH1 spans 782 to 970 (RNRQSIKLSK…ANSPSFTAKA (189 aa)).

Belongs to the TRAFAC class myosin-kinesin ATPase superfamily. Myosin family. In terms of assembly, myosin I heavy chain is single-headed. Dimer of a heavy and a light chain. Inability to self-assemble into filaments.

In terms of biological role, actin-based motor protein, possibly involved in a wide range of motile processes, such as cell movement across a surface, and extension and retraction of pseudopodia or lamellipodia. This chain is Myosin IA heavy chain (myoA), found in Dictyostelium discoideum (Social amoeba).